The sequence spans 152 residues: MKLILTADVDNLGAPGDTVEVKDGYGRNYLLPRGLAIVASRGAQKQVEGIRRAQEARRVRDLDHANELKQAIEGLSAVSLSVKTAGTGKLFGSVTQSDVAAAIKAAGGPVIDKRSIELPKSHIKSTGKHTIAVHLHPDVTAKFDLQVDAAAS.

Belongs to the bacterial ribosomal protein bL9 family.

Functionally, binds to the 23S rRNA. This chain is Large ribosomal subunit protein bL9, found in Nocardia farcinica (strain IFM 10152).